Here is a 306-residue protein sequence, read N- to C-terminus: Ribonuclease Z (306 aa).

H63, H65, D67, H68, H141, D211, and H269 together coordinate Zn(2+). D67 (proton acceptor) is an active-site residue.

The protein belongs to the RNase Z family. As to quaternary structure, homodimer. It depends on Zn(2+) as a cofactor.

The catalysed reaction is Endonucleolytic cleavage of RNA, removing extra 3' nucleotides from tRNA precursor, generating 3' termini of tRNAs. A 3'-hydroxy group is left at the tRNA terminus and a 5'-phosphoryl group is left at the trailer molecule.. Functionally, zinc phosphodiesterase, which displays some tRNA 3'-processing endonuclease activity. Probably involved in tRNA maturation, by removing a 3'-trailer from precursor tRNA. The polypeptide is Ribonuclease Z (Staphylococcus epidermidis (strain ATCC 35984 / DSM 28319 / BCRC 17069 / CCUG 31568 / BM 3577 / RP62A)).